We begin with the raw amino-acid sequence, 68 residues long: Conotoxin PnMLKM-011 (68 aa).

The signal sequence occupies residues 1–17 (MGVVLFIFLVLFPLATL). A propeptide spanning residues 18–51 (QLDPDQPVERYAENKQLLNPDERRGIILHALGQR) is cleaved from the precursor. 3 cysteine pairs are disulfide-bonded: cysteine 53/cysteine 65, cysteine 54/cysteine 63, and cysteine 59/cysteine 66. The residue at position 67 (leucine 67) is a Leucine amide.

The protein belongs to the conotoxin M superfamily. Expressed by the venom duct.

The protein localises to the secreted. This chain is Conotoxin PnMLKM-011, found in Conus pennaceus (Feathered cone).